Reading from the N-terminus, the 276-residue chain is Glutamate racemase (276 aa).

Substrate is bound by residues 9-10 (DS) and 41-42 (YG). The active-site Proton donor/acceptor is Cys72. 73 to 74 (NT) contacts substrate. The Proton donor/acceptor role is filled by Cys183. 184 to 185 (TH) is a substrate binding site.

The protein belongs to the aspartate/glutamate racemases family.

It carries out the reaction L-glutamate = D-glutamate. It participates in cell wall biogenesis; peptidoglycan biosynthesis. Functionally, provides the (R)-glutamate required for cell wall biosynthesis. This is Glutamate racemase from Shouchella clausii (strain KSM-K16) (Alkalihalobacillus clausii).